The primary structure comprises 146 residues: Hemoglobin subunit beta (146 aa).

Residue V1 is modified to N-acetylvaline. The Globin domain occupies 2–146 (HLTADEKAAV…VATALAHKYH (145 aa)). T12 carries the post-translational modification Phosphothreonine. S44 carries the post-translational modification Phosphoserine. K59 is subject to N6-acetyllysine. Heme b is bound at residue H63. K82 is subject to N6-acetyllysine. H92 is a binding site for heme b. Position 93 is an S-nitrosocysteine (C93). K144 carries the N6-acetyllysine modification.

Belongs to the globin family. Heterotetramer of two alpha chains and two beta chains. As to expression, red blood cells.

Its function is as follows. Involved in oxygen transport from the lung to the various peripheral tissues. This is Hemoglobin subunit beta (HBB) from Taphozous georgianus (Sharp-nosed tomb bat).